The primary structure comprises 215 residues: MFTGIIEETGTIESMKKAGHAMALTIKCSKILEDVHLGDSIAVNGICLTVTDFTKNQFTVDVMPETVKATSLNDLTKGSKVNLERAMAANGRFGGHFVSGHVDGTAEITRIEEKSNAVYYDLKMDPSLTKTLVLKGSITVDGVSLTIFGLTEDTVTISLIPHTISETIFSEKTIGSKVNIECDMIGKYMYRFLHKANENKTQQTITKAFLSENGF.

2 Lumazine-binding repeats span residues 1-96 and 97-193; these read MFTG…FGGH and FVSG…YRFL. 2,4-dihydroxypteridine contacts are provided by residues 4–6, 47–49, 61–66, 100–102, lysine 135, 144–146, and 158–163; these read GII, CLT, DVMPET, GHV, SLT, and SLIPHT.

Homotrimer. Can interact with 6,7-dimethyl-8-ribityllumazine synthase, forming a lumazine synthase/riboflavin synthase complex, also designated as 'heavy riboflavin synthase complex', which consists of a trimer of riboflavin synthase enclosed within an icosahedral structure composed of 60 subunits of 6,7-dimethyl-8-ribityllumazine synthase.

The catalysed reaction is 2 6,7-dimethyl-8-(1-D-ribityl)lumazine + H(+) = 5-amino-6-(D-ribitylamino)uracil + riboflavin. The protein operates within cofactor biosynthesis; riboflavin biosynthesis; riboflavin from 2-hydroxy-3-oxobutyl phosphate and 5-amino-6-(D-ribitylamino)uracil: step 2/2. With respect to regulation, is activated by sulfite ions. Its function is as follows. Catalyzes the dismutation of two molecules of 6,7-dimethyl-8-ribityllumazine, resulting in the formation of riboflavin and 5-amino-6-(D-ribitylamino)uracil. The polypeptide is Riboflavin synthase (ribE) (Bacillus subtilis (strain 168)).